Here is a 321-residue protein sequence, read N- to C-terminus: Mas-related G-protein coupled receptor member H (321 aa).

The Extracellular segment spans residues methionine 1 to tyrosine 35. Asparagine 23 is a glycosylation site (N-linked (GlcNAc...) asparagine). The helical transmembrane segment at threonine 36–isoleucine 56 threads the bilayer. Topologically, residues tryptophan 57–tyrosine 71 are cytoplasmic. The helical transmembrane segment at isoleucine 72–valine 92 threads the bilayer. Residues asparagine 93 to leucine 102 are Extracellular-facing. Residues valine 103–valine 126 form a helical membrane-spanning segment. Residues glutamate 127–serine 147 are Cytoplasmic-facing. A helical membrane pass occupies residues threonine 148–phenylalanine 168. Residues cysteine 169–cysteine 188 lie on the Extracellular side of the membrane. A helical membrane pass occupies residues threonine 189–glutamine 209. Residues valine 210–isoleucine 225 lie on the Cytoplasmic side of the membrane. The chain crosses the membrane as a helical span at residues isoleucine 226–isoleucine 246. Residue glycine 247 is a topological domain, extracellular. The chain crosses the membrane as a helical span at residues tyrosine 248–asparagine 271. At cysteine 272–proline 320 the chain is on the cytoplasmic side.

This sequence belongs to the G-protein coupled receptor 1 family. Mas subfamily.

Its subcellular location is the cell membrane. Orphan receptor. May regulate nociceptor function and/or development, including the sensation or modulation of pain. This Rattus norvegicus (Rat) protein is Mas-related G-protein coupled receptor member H (Mrgprh).